The primary structure comprises 142 residues: MKHGIKKNKLSRCTEHRLSMLKNLSISLINHEQIVTTLPKAKALRPYVEKFITIAKNNDSLHGRRLLLSRLHNSKLVVDKLLSVLANRYQDRKGGYSRIIKFGTRKGDCAPMAVIELVDRDISAKGEIYSKNKKGSKVVTQS.

It belongs to the bacterial ribosomal protein bL17 family. As to quaternary structure, part of the 50S ribosomal subunit. Contacts protein L32.

The sequence is that of Large ribosomal subunit protein bL17 from Wolbachia pipientis subsp. Culex pipiens (strain wPip).